The sequence spans 157 residues: Phosphopantetheine adenylyltransferase (157 aa).

Ser8 contacts substrate. Residues 8–9 (SF) and His16 each bind ATP. Substrate is bound by residues Lys40, Thr72, and Arg86. ATP contacts are provided by residues 87–89 (GLR), Glu97, and 122–128 (YSFLSSS).

The protein belongs to the bacterial CoaD family. As to quaternary structure, homohexamer. Mg(2+) is required as a cofactor.

It is found in the cytoplasm. The enzyme catalyses (R)-4'-phosphopantetheine + ATP + H(+) = 3'-dephospho-CoA + diphosphate. The protein operates within cofactor biosynthesis; coenzyme A biosynthesis; CoA from (R)-pantothenate: step 4/5. In terms of biological role, reversibly transfers an adenylyl group from ATP to 4'-phosphopantetheine, yielding dephospho-CoA (dPCoA) and pyrophosphate. The polypeptide is Phosphopantetheine adenylyltransferase (Crocosphaera subtropica (strain ATCC 51142 / BH68) (Cyanothece sp. (strain ATCC 51142))).